Here is a 79-residue protein sequence, read N- to C-terminus: Small ribosomal subunit protein bS18B (79 aa).

Basic and acidic residues predominate over residues methionine 1–proline 11. A disordered region spans residues methionine 1–valine 24.

It belongs to the bacterial ribosomal protein bS18 family. Part of the 30S ribosomal subunit. Forms a tight heterodimer with protein bS6.

In terms of biological role, binds as a heterodimer with protein bS6 to the central domain of the 16S rRNA, where it helps stabilize the platform of the 30S subunit. The protein is Small ribosomal subunit protein bS18B of Streptomyces coelicolor (strain ATCC BAA-471 / A3(2) / M145).